Reading from the N-terminus, the 456-residue chain is Molybdate transporter 1 (456 aa).

The next 9 helical transmembrane spans lie at 67–87 (LIFTGIYNAITGAVYGVPMPV), 110–130 (IMAAGICTGGILFVLGISGLM), 133–153 (VFNIIPLSVVRGIQLSQGLAF), 177–197 (PWLGLDGLVLALVCVLFIVLV), 225–245 (VIANVPSALLIFLLGVVLAFI), 309–329 (AASVSMTVGLMNMVGCWFGAM), 354–374 (LLGVAKLVLGLVLGGSLVGIL), 377–397 (FPVGVLGALLLFAGVELAMAA), and 417–437 (LGSNAAIGFVAGDLLYVVLWM).

This sequence belongs to the SLC26A/SulP transporter (TC 2.A.53) family. As to expression, strongly expressed in roots. Detected in the vascular tissues of hypocotyls, in petioles and vascular tissues of cotyledons and leaves, in mesophyll cells, stamen, sepals and siliques.

The protein localises to the cell membrane. It localises to the endomembrane system. The protein resides in the mitochondrion membrane. Its activity is regulated as follows. Not inhibited by sulfate. Its function is as follows. High affinity molybdate transporter. Unable to transport sulfate. In Arabidopsis thaliana (Mouse-ear cress), this protein is Molybdate transporter 1 (MOT1).